Consider the following 95-residue polypeptide: Turripeptide OL184 (95 aa).

In terms of processing, contains 5 disulfide bonds. In terms of tissue distribution, expressed by the venom duct.

The protein resides in the secreted. Its function is as follows. Acts as a neurotoxin by inhibiting an ion channel. The protein is Turripeptide OL184 of Iotyrris olangoensis (Sea snail).